Consider the following 212-residue polypeptide: Tetraspanin-31-B (212 aa).

Residues methionine 1 to alanine 12 lie on the Cytoplasmic side of the membrane. The chain crosses the membrane as a helical span at residues leucine 13–tryptophan 33. The Extracellular segment spans residues glycine 34 to histidine 44. The chain crosses the membrane as a helical span at residues isoleucine 45–isoleucine 65. Residues glycine 66–glutamine 72 are Cytoplasmic-facing. Residues valine 73–serine 93 form a helical membrane-spanning segment. The Extracellular segment spans residues cysteine 94–lysine 175. Asparagine 100, asparagine 109, asparagine 117, and asparagine 134 each carry an N-linked (GlcNAc...) asparagine glycan. A helical membrane pass occupies residues isoleucine 176 to phenylalanine 196. The Cytoplasmic portion of the chain corresponds to arginine 197–leucine 212.

The protein belongs to the tetraspanin (TM4SF) family.

It localises to the membrane. The sequence is that of Tetraspanin-31-B (tspan31-b) from Xenopus laevis (African clawed frog).